The chain runs to 622 residues: Cilia- and flagella-associated protein 206 (622 aa).

The protein belongs to the CFAP206 family.

The protein resides in the cytoplasm. The protein localises to the cytoskeleton. It localises to the cilium axoneme. Its subcellular location is the cilium basal body. Essential for sperm motility and is involved in the regulation of the beating frequency of motile cilia on the epithelial cells of the respiratory tract. Required for the establishment of radial spokes in sperm flagella. The sequence is that of Cilia- and flagella-associated protein 206 from Bos taurus (Bovine).